Here is a 65-residue protein sequence, read N- to C-terminus: Sarcoplasmic/endoplasmic reticulum calcium ATPase regulator ARLN (65 aa).

M1 bears the N-acetylmethionine mark. The tract at residues 1–38 (MEVGQAASGTDGVRERRGSSAARRRSQDEPVQSGMNGI) is disordered. Phosphoserine occurs at positions 19 and 26. Residues 44 to 64 (WLDLWLFILFDLALFIFVYLL) form a helical membrane-spanning segment.

Homooligomer. Can also form heterooligomers with other sarcoplasmic/endoplasmic reticulum calcium ATPase (SERCA) regulators ERLN, PLN, SLN and STRIT1/DWORF. Monomer. Interacts as a monomer with ATP2A2/SERCA2; the interaction results in inhibition of ATP2A2 Ca(2+) affinity.

It is found in the endoplasmic reticulum membrane. Its function is as follows. Inhibits the activity of the calcium ATPases ATP2A2/SERCA2 and ATP2A3/SERCA3 by decreasing their apparent affinity for Ca(2+). In Rattus norvegicus (Rat), this protein is Sarcoplasmic/endoplasmic reticulum calcium ATPase regulator ARLN (Arln).